The chain runs to 401 residues: Imidazolonepropionase (401 aa).

Residues His66 and His68 each coordinate Fe(3+). Positions 66 and 68 each coordinate Zn(2+). 4-imidazolone-5-propanoate is bound by residues Arg75, Tyr138, and His171. N-formimidoyl-L-glutamate is bound at residue Tyr138. His236 serves as a coordination point for Fe(3+). His236 lines the Zn(2+) pocket. Gln239 provides a ligand contact to 4-imidazolone-5-propanoate. Residue Asp311 coordinates Fe(3+). Residue Asp311 participates in Zn(2+) binding. Asn313 and Gly315 together coordinate N-formimidoyl-L-glutamate. Residue Thr316 participates in 4-imidazolone-5-propanoate binding.

Belongs to the metallo-dependent hydrolases superfamily. HutI family. The cofactor is Zn(2+). Fe(3+) serves as cofactor.

Its subcellular location is the cytoplasm. The catalysed reaction is 4-imidazolone-5-propanoate + H2O = N-formimidoyl-L-glutamate. It participates in amino-acid degradation; L-histidine degradation into L-glutamate; N-formimidoyl-L-glutamate from L-histidine: step 3/3. Functionally, catalyzes the hydrolytic cleavage of the carbon-nitrogen bond in imidazolone-5-propanoate to yield N-formimidoyl-L-glutamate. It is the third step in the universal histidine degradation pathway. This is Imidazolonepropionase from Pseudomonas putida (strain ATCC 47054 / DSM 6125 / CFBP 8728 / NCIMB 11950 / KT2440).